The sequence spans 249 residues: Olfactory receptor 1571 (249 aa).

A helical membrane pass occupies residues 1–9 (LLMCNLCFA). The Extracellular portion of the chain corresponds to 10–40 (DICFTSASIPTNLVNIQTKNKVITYEGCISQ). Cys37 and Cys119 are oxidised to a cystine. A helical transmembrane segment spans residues 41–60 (VYFFILFGVLDNFLLAVMAY). The Cytoplasmic segment spans residues 61-82 (DRYVAICHPLHYTVIMNRRLCG). A helical membrane pass occupies residues 83-103 (LLVLGSWVTTALNSLLQSSMA). The Extracellular segment spans residues 104–136 (LRLSFCTDLKIPHFVCELNQLVLLACNDTFPND). An N-linked (GlcNAc...) asparagine glycan is attached at Asn130. A helical membrane pass occupies residues 137-158 (MVMYFAAVLLGGGPLAGILYSY). Over 159–180 (SKIVSSIRAISSSQGKYKAFST) the chain is Cytoplasmic. A helical transmembrane segment spans residues 181–200 (CASHLSVVSLFYSTLLGVYL). Residues 201-210 (SSSFTQNSHS) lie on the Extracellular side of the membrane. Residues 211–232 (TARASVMYSVVTPMLNPFIYSL) traverse the membrane as a helical segment. Residues 233-249 (RNKDLMGALRRLFRRKP) are Cytoplasmic-facing.

Belongs to the G-protein coupled receptor 1 family. Tongue specific.

The protein resides in the cell membrane. Its function is as follows. Possible taste receptor. The chain is Olfactory receptor 1571 (Olr1571) from Rattus norvegicus (Rat).